The following is a 388-amino-acid chain: G2/mitotic-specific cyclin-B (388 aa).

Belongs to the cyclin family. Cyclin AB subfamily. In terms of assembly, interacts with the CDK1 protein kinase to form a serine/threonine kinase holoenzyme complex also known as maturation promoting factor (MPF). The cyclin subunit imparts substrate specificity to the complex.

Essential for the control of the cell cycle at the G2/M (mitosis) transition. The sequence is that of G2/mitotic-specific cyclin-B from Marthasterias glacialis (Spiny starfish).